We begin with the raw amino-acid sequence, 473 residues long: Photosystem II CP43 reaction center protein (473 aa).

Positions 1-14 (MKTLYSLRRFYPVE) are excised as a propeptide. Position 15 is an N-acetylthreonine (Thr-15). Phosphothreonine is present on Thr-15. The next 5 membrane-spanning stretches (helical) occupy residues 69 to 93 (LFEV…PHLA), 134 to 155 (LLGP…KDRN), 178 to 200 (KALY…RKIT), 255 to 275 (KPFA…LSYS), and 291 to 312 (WFNN…ASQA). A [CaMn4O5] cluster-binding site is contributed by Glu-367. A helical membrane pass occupies residues 447 to 471 (RARAAAAGFEKGIDRDFEPVLSMTP).

It belongs to the PsbB/PsbC family. PsbC subfamily. In terms of assembly, PSII is composed of 1 copy each of membrane proteins PsbA, PsbB, PsbC, PsbD, PsbE, PsbF, PsbH, PsbI, PsbJ, PsbK, PsbL, PsbM, PsbT, PsbX, PsbY, PsbZ, Psb30/Ycf12, at least 3 peripheral proteins of the oxygen-evolving complex and a large number of cofactors. It forms dimeric complexes. The cofactor is Binds multiple chlorophylls and provides some of the ligands for the Ca-4Mn-5O cluster of the oxygen-evolving complex. It may also provide a ligand for a Cl- that is required for oxygen evolution. PSII binds additional chlorophylls, carotenoids and specific lipids..

The protein resides in the plastid. Its subcellular location is the chloroplast thylakoid membrane. One of the components of the core complex of photosystem II (PSII). It binds chlorophyll and helps catalyze the primary light-induced photochemical processes of PSII. PSII is a light-driven water:plastoquinone oxidoreductase, using light energy to abstract electrons from H(2)O, generating O(2) and a proton gradient subsequently used for ATP formation. The sequence is that of Photosystem II CP43 reaction center protein from Calycanthus floridus var. glaucus (Eastern sweetshrub).